A 173-amino-acid chain; its full sequence is Protein MOTHER of FT and TFL1 (173 aa).

Position 2 is an N-acetylalanine (alanine 2).

The protein belongs to the phosphatidylethanolamine-binding protein family. In terms of tissue distribution, expressed in gametophytes and developing seeds.

The protein localises to the cytoplasm. Its function is as follows. May form complexes with phosphorylated ligands by interfering with kinases and their effectors. Regulates seed germination via the abscisic acid (ABA) and gibberellic acid (GA)signaling pathways. During seed germination, MFT expression is directly repressed by ABI3 or promoted by ABI5 in the ABA signaling pathway. Involved in a negative feedback regulation of ABA signaling. Promotes embryo growth by direct repression of ABI5. In the GA signaling pathway, MFT expression is promoted by the DELLA protein RGL2 during seed germination. May regulate seed germination and fertility through the brassinosteroid (BR) signaling pathway. The protein is Protein MOTHER of FT and TFL1 (MFT) of Arabidopsis thaliana (Mouse-ear cress).